A 363-amino-acid chain; its full sequence is Protein-arginine kinase (363 aa).

One can recognise a Phosphagen kinase C-terminal domain in the interval 24–254 (IVLSSRIRLA…AQLIEQERSA (231 aa)). Residues 27–31 (SSRIR), His92, Arg125, 176–180 (RASVM), and 207–212 (RGIYGE) contribute to the ATP site. An RDXXRA motif of the pArg binding pocket involved in allosteric regulation motif is present at residues 337-342 (RDIKRA).

It belongs to the ATP:guanido phosphotransferase family.

It catalyses the reaction L-arginyl-[protein] + ATP = N(omega)-phospho-L-arginyl-[protein] + ADP + H(+). Its activity is regulated as follows. Appears to be allosterically activated by the binding of pArg-containing polypeptides to the pArg-binding pocket localized in the C-terminal domain of McsB. Its function is as follows. Catalyzes the specific phosphorylation of arginine residues in a large number of proteins. Is part of the bacterial stress response system. Protein arginine phosphorylation has a physiologically important role and is involved in the regulation of many critical cellular processes, such as protein homeostasis, motility, competence, and stringent and stress responses, by regulating gene expression and protein activity. The chain is Protein-arginine kinase from Bacillus pumilus (strain SAFR-032).